A 384-amino-acid chain; its full sequence is 1-deoxy-D-xylulose 5-phosphate reductoisomerase (384 aa).

NADPH contacts are provided by Thr10, Gly11, Ser12, Ile13, Arg37, Asn38, and Asn124. Lys125 lines the 1-deoxy-D-xylulose 5-phosphate pocket. Residue Glu126 participates in NADPH binding. Residue Asp150 coordinates Mn(2+). Residues Ser151, Glu152, Ser176, and His199 each contribute to the 1-deoxy-D-xylulose 5-phosphate site. Glu152 lines the Mn(2+) pocket. Residue Gly205 coordinates NADPH. Residues Ser212, Asn217, Lys218, and Glu221 each coordinate 1-deoxy-D-xylulose 5-phosphate. Residue Glu221 coordinates Mn(2+).

It belongs to the DXR family. It depends on Mg(2+) as a cofactor. The cofactor is Mn(2+).

The catalysed reaction is 2-C-methyl-D-erythritol 4-phosphate + NADP(+) = 1-deoxy-D-xylulose 5-phosphate + NADPH + H(+). It functions in the pathway isoprenoid biosynthesis; isopentenyl diphosphate biosynthesis via DXP pathway; isopentenyl diphosphate from 1-deoxy-D-xylulose 5-phosphate: step 1/6. Its function is as follows. Catalyzes the NADPH-dependent rearrangement and reduction of 1-deoxy-D-xylulose-5-phosphate (DXP) to 2-C-methyl-D-erythritol 4-phosphate (MEP). The polypeptide is 1-deoxy-D-xylulose 5-phosphate reductoisomerase (Clostridium perfringens (strain SM101 / Type A)).